Consider the following 318-residue polypeptide: Cytosolic Fe-S cluster assembly factor Nubp1 homolog (318 aa).

Over residues 1–15 (MSAPEVENKPADAPE) the composition is skewed to basic and acidic residues. The segment at 1 to 29 (MSAPEVENKPADAPEHCPGTESENAGKAS) is disordered. Residues Cys-17, Cys-31, Cys-34, and Cys-40 each contribute to the [4Fe-4S] cluster site. 70 to 77 (GKGGVGKS) contributes to the ATP binding site. The [4Fe-4S] cluster site is built by Cys-245 and Cys-248.

It belongs to the Mrp/NBP35 ATP-binding proteins family. NUBP1/NBP35 subfamily. In terms of assembly, heterotetramer of 2 Nubp1 and 2 Nubp2 chains. The cofactor is [4Fe-4S] cluster.

It localises to the cytoplasm. In terms of biological role, component of the cytosolic iron-sulfur (Fe/S) protein assembly (CIA) machinery. Required for maturation of extramitochondrial Fe-S proteins. The Nubp1-Nubp2 heterotetramer forms a Fe-S scaffold complex, mediating the de novo assembly of an Fe-S cluster and its transfer to target apoproteins. This Aedes aegypti (Yellowfever mosquito) protein is Cytosolic Fe-S cluster assembly factor Nubp1 homolog.